The following is a 283-amino-acid chain: Putative 4-diphosphocytidyl-2-C-methyl-D-erythritol kinase (283 aa).

Lys10 is a catalytic residue. ATP is bound at residue 94–104 (PVCAGLGGGST). Asp136 is a catalytic residue.

The protein belongs to the GHMP kinase family. IspE subfamily.

The enzyme catalyses 4-CDP-2-C-methyl-D-erythritol + ATP = 4-CDP-2-C-methyl-D-erythritol 2-phosphate + ADP + H(+). Its function is as follows. Catalyzes the phosphorylation of the position 2 hydroxy group of 4-diphosphocytidyl-2C-methyl-D-erythritol. This is Putative 4-diphosphocytidyl-2-C-methyl-D-erythritol kinase from Streptococcus agalactiae serotype III (strain NEM316).